Consider the following 328-residue polypeptide: Isopenicillin N synthase (328 aa).

Residues arginine 85, tyrosine 89, serine 181, and tyrosine 187 each contribute to the isopenicillin N site. The N-[(5S)-5-amino-5-carboxypentanoyl]-L-cysteinyl-D-valine site is built by arginine 85, tyrosine 89, serine 181, tyrosine 187, histidine 210, and aspartate 212. The 107-residue stretch at 178 to 284 (TLSSVSLIRY…RLSLPFFFHA (107 aa)) folds into the Fe2OG dioxygenase domain. The Fe(2+) site is built by histidine 210, aspartate 212, and histidine 266. 2-oxoglutarate is bound at residue arginine 275. Serine 277 contributes to the isopenicillin N binding site. Residue serine 277 participates in N-[(5S)-5-amino-5-carboxypentanoyl]-L-cysteinyl-D-valine binding.

Belongs to the iron/ascorbate-dependent oxidoreductase family. Requires Fe cation as cofactor. L-ascorbate is required as a cofactor.

The catalysed reaction is N-[(5S)-5-amino-5-carboxypentanoyl]-L-cysteinyl-D-valine + O2 = isopenicillin N + 2 H2O. It functions in the pathway antibiotic biosynthesis; penicillin G biosynthesis; penicillin G from L-alpha-aminoadipate and L-cysteine and L-valine: step 2/3. Removes, in the presence of oxygen, 4 hydrogen atoms from delta-L-(alpha-aminoadipyl)-L-cysteinyl-D-valine (ACV) to form the azetidinone and thiazolidine rings of isopenicillin. The chain is Isopenicillin N synthase (pcbC) from Amycolatopsis lactamdurans (Nocardia lactamdurans).